The primary structure comprises 398 residues: Acetate kinase (398 aa).

Asn8 contributes to the Mg(2+) binding site. Lys15 lines the ATP pocket. Arg89 contacts substrate. Residue Asp146 is the Proton donor/acceptor of the active site. Residues 206 to 210, 283 to 285, and 331 to 335 contribute to the ATP site; these read HIGNG, DMR, and GMGEN. Position 383 (Glu383) interacts with Mg(2+).

Belongs to the acetokinase family. In terms of assembly, homodimer. Mg(2+) is required as a cofactor. It depends on Mn(2+) as a cofactor.

The protein resides in the cytoplasm. The catalysed reaction is acetate + ATP = acetyl phosphate + ADP. It functions in the pathway metabolic intermediate biosynthesis; acetyl-CoA biosynthesis; acetyl-CoA from acetate: step 1/2. In terms of biological role, catalyzes the formation of acetyl phosphate from acetate and ATP. Can also catalyze the reverse reaction. The protein is Acetate kinase of Streptococcus pyogenes serotype M28 (strain MGAS6180).